We begin with the raw amino-acid sequence, 281 residues long: ATP phosphoribosyltransferase (281 aa).

Belongs to the ATP phosphoribosyltransferase family. Long subfamily. Mg(2+) is required as a cofactor.

Its subcellular location is the cytoplasm. The catalysed reaction is 1-(5-phospho-beta-D-ribosyl)-ATP + diphosphate = 5-phospho-alpha-D-ribose 1-diphosphate + ATP. It functions in the pathway amino-acid biosynthesis; L-histidine biosynthesis; L-histidine from 5-phospho-alpha-D-ribose 1-diphosphate: step 1/9. With respect to regulation, feedback inhibited by histidine. Its function is as follows. Catalyzes the condensation of ATP and 5-phosphoribose 1-diphosphate to form N'-(5'-phosphoribosyl)-ATP (PR-ATP). Has a crucial role in the pathway because the rate of histidine biosynthesis seems to be controlled primarily by regulation of HisG enzymatic activity. The protein is ATP phosphoribosyltransferase of Corynebacterium efficiens (strain DSM 44549 / YS-314 / AJ 12310 / JCM 11189 / NBRC 100395).